The sequence spans 173 residues: uncharacterized protein (173 aa).

In terms of domain architecture, MSP spans 16-133 (DLVLRPETIT…KHVLIRFPNK (118 aa)). Residues 141–163 (KKMEEDDMKQQKERNKLSNEKMG) are compositionally biased toward basic and acidic residues. The tract at residues 141 to 173 (KKMEEDDMKQQKERNKLSNEKMGIRNQNMGEKK) is disordered.

This is an uncharacterized protein from Caenorhabditis elegans.